Consider the following 330-residue polypeptide: DNA-directed RNA polymerase subunit alpha (330 aa).

The alpha N-terminal domain (alpha-NTD) stretch occupies residues 1–231 (MQTNLLKPKA…EQLAVFAQLE (231 aa)). Residues 250-330 (FDPILLRPVD…NWPPAGLDKR (81 aa)) form an alpha C-terminal domain (alpha-CTD) region.

This sequence belongs to the RNA polymerase alpha chain family. In terms of assembly, homodimer. The RNAP catalytic core consists of 2 alpha, 1 beta, 1 beta' and 1 omega subunit. When a sigma factor is associated with the core the holoenzyme is formed, which can initiate transcription.

It catalyses the reaction RNA(n) + a ribonucleoside 5'-triphosphate = RNA(n+1) + diphosphate. Functionally, DNA-dependent RNA polymerase catalyzes the transcription of DNA into RNA using the four ribonucleoside triphosphates as substrates. In Acidovorax ebreus (strain TPSY) (Diaphorobacter sp. (strain TPSY)), this protein is DNA-directed RNA polymerase subunit alpha.